A 182-amino-acid polypeptide reads, in one-letter code: uncharacterized protein (182 aa).

Residues Leu40–Asn182 form a disordered region. Over residues Asn52–Asp86 the composition is skewed to low complexity. The segment covering Asn87–Asp100 has biased composition (acidic residues). Composition is skewed to low complexity over residues Asn104–Asn134 and Asp148–Asn157. The segment covering Phe165–Asn182 has biased composition (basic and acidic residues).

This is an uncharacterized protein from Dictyostelium discoideum (Social amoeba).